Consider the following 260-residue polypeptide: Carbonic anhydrase 2 (260 aa).

At Ser-2 the chain carries N-acetylserine. Residue Ser-2 is modified to Phosphoserine. The Alpha-carbonic anhydrase domain maps to 3-259 (HHWGYSKHNG…LKNRKIKASF (257 aa)). The active-site Proton acceptor is His-64. Asn-67 is a catalytic residue. Ser-87 carries the post-translational modification Phosphoserine. Zn(2+)-binding residues include His-94, His-96, and His-119. Residue Tyr-127 is part of the active site. Ser-165 carries the phosphoserine modification. A substrate-binding site is contributed by 198–199 (TT).

Belongs to the alpha-carbonic anhydrase family. Interacts with SLC4A4. Interaction with SLC4A7 regulates SLC4A7 transporter activity. Interacts with SLC26A6. Zn(2+) serves as cofactor.

It localises to the cytoplasm. The protein localises to the cell membrane. The catalysed reaction is hydrogencarbonate + H(+) = CO2 + H2O. It catalyses the reaction urea = cyanamide + H2O. Inhibited by acetazolamide. Catalyzes the reversible hydration of carbon dioxide. Can also hydrate cyanamide to urea. Involved in the regulation of fluid secretion into the anterior chamber of the eye. Essential for bone resorption and osteoclast differentiation. Contributes to intracellular pH regulation in the duodenal upper villous epithelium during proton-coupled peptide absorption. Stimulates the chloride-bicarbonate exchange activity of SLC26A6. The protein is Carbonic anhydrase 2 (Ca2) of Mus musculus (Mouse).